A 352-amino-acid polypeptide reads, in one-letter code: C-C chemokine receptor type 5 (352 aa).

At 1–30 (MDYQVSSPTYDIDYYTSEPCQKINVKQIAA) the chain is on the extracellular side. Position 3 is a sulfotyrosine (Tyr3). O-linked (GalNAc...) serine glycosylation is found at Ser6 and Ser7. 3 positions are modified to sulfotyrosine: Tyr10, Tyr14, and Tyr15. 2 cysteine pairs are disulfide-bonded: Cys20–Cys269 and Cys101–Cys178. A helical transmembrane segment spans residues 31–58 (RLLPPLYSLVFIFGFVGNILVVLILINC). The Cytoplasmic segment spans residues 59-68 (KRLKSMTDIY). A helical transmembrane segment spans residues 69 to 89 (LLNLAISDLLFLLTVPFWAHY). Residues 90–102 (AAAQWDFGNTMCQ) are Extracellular-facing. A helical membrane pass occupies residues 103–124 (LLTGLYFIGFFSGIFFIILLTI). The Cytoplasmic portion of the chain corresponds to 125-141 (DRYLAIVHAVFALKART). The chain crosses the membrane as a helical span at residues 142–166 (VTFGVVTSVITWVVAVFASLPRIIF). Residues 167–198 (TRSQREGLHYTCSSHFPYSQYQFWKNFQTLKI) lie on the Extracellular side of the membrane. Residues 199-218 (VILGLVLPLLVMVICYSGIL) traverse the membrane as a helical segment. The Cytoplasmic segment spans residues 219 to 235 (KTLLRCRNEKKRHRAVR). Residues 236–260 (LIFTIMIVYFLFWAPYNIVLLLNTF) traverse the membrane as a helical segment. The Extracellular portion of the chain corresponds to 261–277 (QEFFGLNNCSSSNRLDQ). Residues 278–301 (AMQVTETLGMTHCCINPIIYAFVG) traverse the membrane as a helical segment. Residues 302–352 (EKFRNYLLVFFQKHIAKRFCKCCSIFQQEAPERASSVYTRSTGEQETSVGL) are Cytoplasmic-facing. 3 S-palmitoyl cysteine lipidation sites follow: Cys321, Cys323, and Cys324. Phosphoserine; by BARK1 occurs at positions 336, 337, 342, and 349.

This sequence belongs to the G-protein coupled receptor 1 family. Interacts with PRAF2. Efficient ligand binding to CCL3/MIP-1alpha and CCL4/MIP-1beta requires sulfation, O-glycosylation and sialic acid modifications. Glycosylation on Ser-6 is required for efficient binding of CCL4. Interacts with GRK2. Interacts with ARRB1 and ARRB2. Interacts with CNIH4. Interacts with S100A4; this interaction stimulates T-lymphocyte chemotaxis. Sulfated on at least 2 of the N-terminal tyrosines. Sulfation is required for efficient binding of the chemokines, CCL3 and CCL4. Post-translationally, palmitoylation in the C-terminal is important for cell surface expression. In terms of processing, phosphorylation on serine residues in the C-terminal is stimulated by binding CC chemokines especially by APO-RANTES. O-glycosylated, but not N-glycosylated. Ser-6 appears to be the major site even if Ser-7 may be also O-glycosylated. Also sialylated glycans present which contribute to chemokine binding. Thr-16 and Ser-17 may also be glycosylated and, if so, with small moieties such as a T-antigen.

It localises to the cell membrane. Receptor for a number of inflammatory CC-chemokines including CCL3/MIP-1-alpha, CCL4/MIP-1-beta and RANTES and subsequently transduces a signal by increasing the intracellular calcium ion level. May play a role in the control of granulocytic lineage proliferation or differentiation. Participates in T-lymphocyte migration to the infection site by acting as a chemotactic receptor. This chain is C-C chemokine receptor type 5 (CCR5), found in Chlorocebus tantalus (Tantalus monkey).